The sequence spans 118 residues: Small ribosomal subunit protein uS13 (118 aa).

Residues 94–118 (GLPVRGQRTQTNARTRKGPRRLARK) are disordered. A compositionally biased stretch (basic residues) spans 107-118 (RTRKGPRRLARK).

Belongs to the universal ribosomal protein uS13 family. Part of the 30S ribosomal subunit. Forms a loose heterodimer with protein S19. Forms two bridges to the 50S subunit in the 70S ribosome.

Functionally, located at the top of the head of the 30S subunit, it contacts several helices of the 16S rRNA. In the 70S ribosome it contacts the 23S rRNA (bridge B1a) and protein L5 of the 50S subunit (bridge B1b), connecting the 2 subunits; these bridges are implicated in subunit movement. Contacts the tRNAs in the A and P-sites. The chain is Small ribosomal subunit protein uS13 from Nitrosococcus oceani (strain ATCC 19707 / BCRC 17464 / JCM 30415 / NCIMB 11848 / C-107).